The chain runs to 88 residues: U2-ctenitoxin-Pn1a (88 aa).

The N-terminal stretch at 1–17 is a signal peptide; it reads MKVAILILSILVLAVAS. Residues 18-34 constitute a propeptide that is removed on maturation; that stretch reads ETIEEYRDDFAVEELER. 5 cysteine pairs are disulfide-bonded: cysteine 37-cysteine 51, cysteine 44-cysteine 57, cysteine 48-cysteine 86, cysteine 50-cysteine 71, and cysteine 59-cysteine 69. Residue lysine 88 is a propeptide.

As to expression, expressed by the venom gland.

It localises to the secreted. In terms of biological role, inhibits voltage-gated sodium channels (Nav). Causes scratching, lacrimation, hypersalivation, sweating and agitation followed by spastic paralysis of the anterior and posterior extremities and death at dose levels of 1.62 mg/mouse. Insecticidal to the larval and adult forms of the house fly. This chain is U2-ctenitoxin-Pn1a, found in Phoneutria nigriventer (Brazilian armed spider).